A 467-amino-acid chain; its full sequence is Retinoic acid receptor RXR-alpha (467 aa).

Residues 1-112 are disordered; it reads MDTKHFLPLD…MNPVSSTEDI (112 aa). The interval 1-139 is modulating domain; that stretch reads MDTKHFLPLD…GNMASFTKHI (139 aa). A Glycyl lysine isopeptide (Lys-Gly) (interchain with G-Cter in SUMO2) cross-link involves residue lysine 4. Residues 11–25 show a composition bias toward polar residues; that stretch reads FSTQVNSSSLNSPTG. Phosphoserine occurs at positions 22 and 28. Over residues 32–52 the composition is skewed to low complexity; the sequence is PSLHPSLGPGIGSPLGSPGQL. The span at 54 to 63 shows a compositional bias: polar residues; the sequence is SPISTLSSPI. Residues serine 61 and serine 75 each carry the phosphoserine; by MAPK8 and MAPK9 modification. Residues 83–109 show a composition bias toward polar residues; the sequence is SVPTTPTLGFGTGSPQLNSPMNPVSST. Threonine 87 carries the phosphothreonine; by MAPK8 and MAPK9 modification. Lysine 113 is covalently cross-linked (Glycyl lysine isopeptide (Lys-Gly) (interchain with G-Cter in SUMO)). Serine 134 carries the phosphoserine modification. Residues cysteine 140 and cysteine 143 each contribute to the Zn(2+) site. The NR C4-type zinc-finger motif lies at 140-160; it reads CAICGDRSSGKHYGVYSCEGC. Positions 140-205 form a DNA-binding region, nuclear receptor; it reads CAICGDRSSG…RYQKCLAMGM (66 aa). N6-acetyllysine is present on lysine 150. Zn(2+) is bound by residues cysteine 157 and cysteine 160. Positions 165–170 are nuclear localization signal; it reads KRTVRK. Residues cysteine 176, cysteine 182, cysteine 192, and cysteine 195 each contribute to the Zn(2+) site. An NR C4-type zinc finger spans residues 176-200; sequence CRDNKDCLIDKRQRNRCQYCRYQKC. The hinge stretch occupies residues 206–229; that stretch reads KREAVQEERQRGKDRNENEVESTS. Residues 211 to 223 are compositionally biased toward basic and acidic residues; that stretch reads QEERQRGKDRNEN. The interval 211–233 is disordered; that stretch reads QEERQRGKDRNENEVESTSSANE. The NR LBD domain occupies 232 to 463; sequence NEDMPVEKIL…TFLMEMLEAP (232 aa). Serine 264 is subject to Phosphoserine. Position 265 is a phosphoserine; by MAPK8 and MAPK9 (serine 265). 2 residues coordinate 9-cis-retinoate: arginine 321 and alanine 332. Arginine 321 and alanine 332 together coordinate all-trans-retinoate. A required for nuclear export region spans residues 353–373; the sequence is RVLTELVSKMRDMQMDKTELG.

This sequence belongs to the nuclear hormone receptor family. NR2 subfamily. Homodimer. Heterodimer with RARA; required for ligand-dependent retinoic acid receptor transcriptional activity. Heterodimer with PPARA (via the leucine-like zipper in the LBD); the interaction is required for PPARA transcriptional activity. Heterodimerizes with PPARG. Heterodimerizes (via NR LBD) with RARB. Heterodimerizes with NR1H4; the heterodimerization enhances the binding affinity for LXXLL motifs from coactivators. Interacts with coactivator NCO6. Interacts with coactivator NCO3. Interacts with coactivator FAM120B. Interacts with coactivator PELP1, SENP6, SFPQ, DNTTIP2 and RNF8. Interacts with PRMT2. Interacts with ASXL1. Interacts with BHLHE40/DEC1, BHLHE41/DEC2, NCOR1 and NCOR2. Interacts in a ligand-dependent fashion with MED1 and NCOA1. Interacts with VDR. Interacts with EP300; the interaction is decreased by 9-cis retinoic acid. Heterodimer (via C-terminus) with NR4A1 (via DNA-binding domain); the interaction is enhanced by 9-cis retinoic acid. NR4A1 competes with EP300 for interaction with RXRA and thereby attenuates EP300 mediated acetylation of RXRA. In the absence of hormonal ligand, interacts with TACC1. Interacts ith IGFBP3. Acetylated by EP300; acetylation enhances DNA binding and transcriptional activity. In terms of processing, phosphorylated on serine and threonine residues mainly in the N-terminal modulating domain. Constitutively phosphorylated on Ser-22 in the presence or absence of ligand. Under stress conditions, hyperphosphorylated by activated JNK on Ser-61, Ser-75, Thr-87 and Ser-265. Phosphorylated on Ser-28, in vitro, by PKA. This phosphorylation is required for repression of cAMP-mediated transcriptional activity of RARA. Post-translationally, ubiquitinated by UBR5, leading to its degradation: UBR5 specifically recognizes and binds ligand-bound RXRA when it is not associated with coactivators (NCOAs). In presence of NCOAs, the UBR5-degron is not accessible, preventing its ubiquitination and degradation. Sumoylation negatively regulates transcriptional activity. Desumoylated specifically by SENP6. Expressed in macrophages (at protein level).

It is found in the nucleus. The protein localises to the cytoplasm. Its subcellular location is the mitochondrion. Its function is as follows. Receptor for retinoic acid that acts as a transcription factor. Forms homo- or heterodimers with retinoic acid receptors (RARs) and binds to target response elements in response to their ligands, all-trans or 9-cis retinoic acid, to regulate gene expression in various biological processes. The RAR/RXR heterodimers bind to the retinoic acid response elements (RARE) composed of tandem 5'-AGGTCA-3' sites known as DR1-DR5 to regulate transcription. The high affinity ligand for retinoid X receptors (RXRs) is 9-cis retinoic acid. In the absence of ligand, the RXR-RAR heterodimers associate with a multiprotein complex containing transcription corepressors that induce histone deacetylation, chromatin condensation and transcriptional suppression. On ligand binding, the corepressors dissociate from the receptors and coactivators are recruited leading to transcriptional activation. Serves as a common heterodimeric partner for a number of nuclear receptors, such as RARA, RARB and PPARA. The RXRA/RARB heterodimer can act as a transcriptional repressor or transcriptional activator, depending on the RARE DNA element context. The RXRA/PPARA heterodimer is required for PPARA transcriptional activity on fatty acid oxidation genes such as ACOX1 and the P450 system genes. Together with RARA, positively regulates microRNA-10a expression, thereby inhibiting the GATA6/VCAM1 signaling response to pulsatile shear stress in vascular endothelial cells. Acts as an enhancer of RARA binding to RARE DNA element. May facilitate the nuclear import of heterodimerization partners such as VDR and NR4A1. Promotes myelin debris phagocytosis and remyelination by macrophages. Plays a role in the attenuation of the innate immune system in response to viral infections, possibly by negatively regulating the transcription of antiviral genes such as type I IFN genes. Involved in the regulation of calcium signaling by repressing ITPR2 gene expression, thereby controlling cellular senescence. The chain is Retinoic acid receptor RXR-alpha (Rxra) from Mus musculus (Mouse).